A 235-amino-acid polypeptide reads, in one-letter code: Large ribosomal subunit protein uL3 (235 aa).

The segment at 150–189 (AGGPASHGSGHHRHAGSTGMRSTPGRGLPGGKKAGQMGNE) is disordered.

This sequence belongs to the universal ribosomal protein uL3 family. As to quaternary structure, part of the 50S ribosomal subunit. Forms a cluster with proteins L14 and L19.

Functionally, one of the primary rRNA binding proteins, it binds directly near the 3'-end of the 23S rRNA, where it nucleates assembly of the 50S subunit. The chain is Large ribosomal subunit protein uL3 from Protochlamydia amoebophila (strain UWE25).